The primary structure comprises 213 residues: Thymidylate kinase (213 aa).

9 to 16 lines the ATP pocket; the sequence is GVEGCGKT.

The protein belongs to the thymidylate kinase family.

The enzyme catalyses dTMP + ATP = dTDP + ADP. Its function is as follows. Phosphorylation of dTMP to form dTDP in both de novo and salvage pathways of dTTP synthesis. This Geotalea uraniireducens (strain Rf4) (Geobacter uraniireducens) protein is Thymidylate kinase.